The primary structure comprises 757 residues: Polyribonucleotide nucleotidyltransferase (757 aa).

Mg(2+) is bound by residues Asp-482 and Asp-488. The KH domain maps to 549–608 (PRMLSFYIDKDKISAAIGSKGKNIRSVCERSNAKIEIGDDGKVSVFATSGTEAEIAKSMM). The S1 motif domain maps to 618–686 (GSIVDVKVVR…KGGCPKLSRR (69 aa)). The span at 703–714 (EERKDGPNDRDN) shows a compositional bias: basic and acidic residues. The disordered stretch occupies residues 703–757 (EERKDGPNDRDNYYNNSFSRKPGGSHHKRPPRPRSGFSNRNRPKFGNNDSSSGFY). Over residues 725-734 (GGSHHKRPPR) the composition is skewed to basic residues.

It belongs to the polyribonucleotide nucleotidyltransferase family. Mg(2+) is required as a cofactor.

The protein resides in the cytoplasm. It catalyses the reaction RNA(n+1) + phosphate = RNA(n) + a ribonucleoside 5'-diphosphate. Involved in mRNA degradation. Catalyzes the phosphorolysis of single-stranded polyribonucleotides processively in the 3'- to 5'-direction. The polypeptide is Polyribonucleotide nucleotidyltransferase (Wolbachia sp. subsp. Drosophila simulans (strain wRi)).